We begin with the raw amino-acid sequence, 965 residues long: UvrABC system protein A (965 aa).

32–39 is an ATP binding site; that stretch reads GLSGSGKS. A C4-type zinc finger spans residues 254–281; that stretch reads CPVCDYSLPELEPRLFSFNAPMGACPAC. ABC transporter domains are found at residues 311 to 588 and 608 to 937; these read WDRR…PRSL and PNAT…HFLA. Position 641-648 (641-648) interacts with ATP; it reads GVSGSGKS. Residues 740 to 766 form a C4-type zinc finger; it reads CEACEGDGLIKVEMHFLPDVYVPCDIC.

The protein belongs to the ABC transporter superfamily. UvrA family. Forms a heterotetramer with UvrB during the search for lesions.

It is found in the cytoplasm. The UvrABC repair system catalyzes the recognition and processing of DNA lesions. UvrA is an ATPase and a DNA-binding protein. A damage recognition complex composed of 2 UvrA and 2 UvrB subunits scans DNA for abnormalities. When the presence of a lesion has been verified by UvrB, the UvrA molecules dissociate. This Xylella fastidiosa (strain Temecula1 / ATCC 700964) protein is UvrABC system protein A.